The primary structure comprises 428 residues: Histidinol dehydrogenase (428 aa).

Positions 234, 256, and 259 each coordinate substrate. Zn(2+)-binding residues include Gln256 and His259. Residues Glu323 and His324 each act as proton acceptor in the active site. Substrate is bound by residues His324, Asp357, Glu411, and His416. Asp357 contributes to the Zn(2+) binding site. Zn(2+) is bound at residue His416.

This sequence belongs to the histidinol dehydrogenase family. The cofactor is Zn(2+).

The enzyme catalyses L-histidinol + 2 NAD(+) + H2O = L-histidine + 2 NADH + 3 H(+). Its pathway is amino-acid biosynthesis; L-histidine biosynthesis; L-histidine from 5-phospho-alpha-D-ribose 1-diphosphate: step 9/9. In terms of biological role, catalyzes the sequential NAD-dependent oxidations of L-histidinol to L-histidinaldehyde and then to L-histidine. The polypeptide is Histidinol dehydrogenase (Campylobacter jejuni (strain RM1221)).